A 112-amino-acid polypeptide reads, in one-letter code: 87 kDa annexin-binding protein (112 aa).

In terms of assembly, binds annexin.

This chain is 87 kDa annexin-binding protein, found in Physarum polycephalum (Slime mold).